Consider the following 527-residue polypeptide: Peptide chain release factor 3 (527 aa).

Residues 9–278 (NKRRTFAIIS…GLTQWAPKPQ (270 aa)) form the tr-type G domain. Residues 18–25 (SHPDAGKT), 86–90 (DTPGH), and 140–143 (NKLD) each bind GTP.

It belongs to the TRAFAC class translation factor GTPase superfamily. Classic translation factor GTPase family. PrfC subfamily.

The protein resides in the cytoplasm. Increases the formation of ribosomal termination complexes and stimulates activities of RF-1 and RF-2. It binds guanine nucleotides and has strong preference for UGA stop codons. It may interact directly with the ribosome. The stimulation of RF-1 and RF-2 is significantly reduced by GTP and GDP, but not by GMP. The chain is Peptide chain release factor 3 from Haemophilus influenzae (strain PittGG).